The sequence spans 315 residues: uncharacterized protein (315 aa).

Belongs to the asfivirus C315R family.

This is an uncharacterized protein from Ornithodoros (relapsing fever ticks).